An 88-amino-acid chain; its full sequence is Small ribosomal subunit protein bS20 (88 aa).

The segment at 1–25 is disordered; that stretch reads MANTAQALKRIRQTNKARAQNASQR. Residues 16-25 are compositionally biased toward polar residues; sequence KARAQNASQR.

This sequence belongs to the bacterial ribosomal protein bS20 family.

Functionally, binds directly to 16S ribosomal RNA. This is Small ribosomal subunit protein bS20 from Dichelobacter nodosus (strain VCS1703A).